Here is a 344-residue protein sequence, read N- to C-terminus: 2-methyl-6-phytyl-1,4-hydroquinone methyltransferase, chloroplastic (344 aa).

Residues 1–62 (MACSMLNGVD…LTTVTKCTLS (62 aa)) constitute a chloroplast transit peptide. The Chloroplast intermembrane segment spans residues 63–313 (ASERPASQPR…PVHPLVFLYR (251 aa)). An SAM motif I region spans residues 121–130 (VVDVGGGTGF). Residues 166 to 179 (CRIIEGDAEDLPFP) are SAM motif II. The segment at 207 to 220 (RVLKLGGKACLIGP) is SAM motif III. A helical transmembrane segment spans residues 314–334 (FLLGALASTYYVLVPIYMWIK). Residues 335–344 (DKIFPKGMPL) are Stromal-facing.

The protein belongs to the class I-like SAM-binding methyltransferase superfamily. MPBQ/MBSQ MT family.

Its subcellular location is the plastid. The protein resides in the chloroplast inner membrane. The catalysed reaction is 2-methyl-6-phytyl-1,4-benzene-1,4-diol + S-adenosyl-L-methionine = 2,3-dimethyl-6-phytylbenzene-1,4-diol + S-adenosyl-L-homocysteine + H(+). It catalyses the reaction 2-methyl-6-(all-trans-nonaprenyl)benzene-1,4-diol + S-adenosyl-L-methionine = plastoquinol-9 + S-adenosyl-L-homocysteine + H(+). The enzyme catalyses 6-geranylgeranyl-2-methylbenzene-1,4-diol + S-adenosyl-L-methionine = 6-geranylgeranyl-2,3-dimethylbenzene-1,4-diol + S-adenosyl-L-homocysteine + H(+). The protein operates within cofactor biosynthesis; tocopherol biosynthesis. Functionally, involved in a key methylation step in both tocopherols (vitamin E) and plastoquinone synthesis. Catalyzes the conversion of 2-methyl-6-phytyl-1,4-hydroquinone (MPBQ) to 2,3-dimethyl-6-phytyl-1,4-hydroquinone (DMPQ, a substrate for tocopherol cyclase), and 2-methyl-6-solanyl-1,4-benzoquinone (MSBQ) to plastoquinone. In Spinacia oleracea (Spinach), this protein is 2-methyl-6-phytyl-1,4-hydroquinone methyltransferase, chloroplastic.